We begin with the raw amino-acid sequence, 362 residues long: Phosphoserine aminotransferase (362 aa).

Arg43 lines the L-glutamate pocket. Residues 77 to 78 (AR), Trp103, Thr153, Asp173, and Gln196 each bind pyridoxal 5'-phosphate. Lys197 is subject to N6-(pyridoxal phosphate)lysine.

It belongs to the class-V pyridoxal-phosphate-dependent aminotransferase family. SerC subfamily. As to quaternary structure, homodimer. Requires pyridoxal 5'-phosphate as cofactor.

It is found in the cytoplasm. The catalysed reaction is O-phospho-L-serine + 2-oxoglutarate = 3-phosphooxypyruvate + L-glutamate. The enzyme catalyses 4-(phosphooxy)-L-threonine + 2-oxoglutarate = (R)-3-hydroxy-2-oxo-4-phosphooxybutanoate + L-glutamate. The protein operates within amino-acid biosynthesis; L-serine biosynthesis; L-serine from 3-phospho-D-glycerate: step 2/3. Its pathway is cofactor biosynthesis; pyridoxine 5'-phosphate biosynthesis; pyridoxine 5'-phosphate from D-erythrose 4-phosphate: step 3/5. Its function is as follows. Catalyzes the reversible conversion of 3-phosphohydroxypyruvate to phosphoserine and of 3-hydroxy-2-oxo-4-phosphonooxybutanoate to phosphohydroxythreonine. This chain is Phosphoserine aminotransferase, found in Legionella pneumophila (strain Paris).